Reading from the N-terminus, the 277-residue chain is Protein CMSS1 (277 aa).

A compositionally biased stretch (acidic residues) spans 1-14 (MADDLGNEWWEEPA). The interval 1-91 (MADDLGNEWW…QHAPTAGTPE (91 aa)) is disordered. The segment covering 24 to 34 (EEVKESEESKG) has biased composition (basic and acidic residues). Basic residues predominate over residues 35-52 (NKKKKIPSGKTQVKRKKE). The span at 53–66 (VKVSQEAEKEDSAP) shows a compositional bias: basic and acidic residues.

This sequence belongs to the CMS1 family.

In Xenopus laevis (African clawed frog), this protein is Protein CMSS1 (cmss1).